The chain runs to 141 residues: Hemoglobin subunit alpha-D (141 aa).

The region spanning 1–141 is the Globin domain; the sequence is VLTAEDKKLI…VAAVLAEKYR (141 aa). 2 residues coordinate heme b: histidine 58 and histidine 87.

The protein belongs to the globin family. In terms of assembly, heterotetramer of two alpha-D chains and two beta chains. In terms of tissue distribution, red blood cells.

Involved in oxygen transport from the lung to the various peripheral tissues. In Sturnus vulgaris (Starling), this protein is Hemoglobin subunit alpha-D (HBAD).